A 95-amino-acid polypeptide reads, in one-letter code: MGRSTKKGPFVDPKLLKKIKQLNEAGEKKIIKTWSRASMIVPEMVGHTIAVYNGLKHIPVYITENMVGHRLGEFSFTRRFGGHADKSASKGQVKK.

Belongs to the universal ribosomal protein uS19 family.

Functionally, protein S19 forms a complex with S13 that binds strongly to the 16S ribosomal RNA. The protein is Small ribosomal subunit protein uS19 of Thermosipho melanesiensis (strain DSM 12029 / CIP 104789 / BI429).